The following is a 245-amino-acid chain: Collagen triple helix repeat-containing protein 1 (245 aa).

A signal peptide spans 1 to 32 (MHPQGRAASPQLLLGLFLVLLLLLQLSAPSSA). The Collagen-like domain occupies 59–92 (QGPAGVPGRDGSPGANGIPGTPGIPGRDGFKGEK). Positions 64–87 (VPGRDGSPGANGIPGTPGIPGRDG) are disordered. The N-linked (GlcNAc...) asparagine glycan is linked to asparagine 188.

Post-translationally, N-glycosylated. Expressed after injury in the carotid arteries (at protein level). Expressed in brain, lung, and after injury in fibroblasts of the adventitia and the neointima of the arteries.

It localises to the secreted. The protein resides in the extracellular space. The protein localises to the extracellular matrix. Its function is as follows. Its overexpression in smooth muscle cell lines increases their migratory ability and inhibits collagen type I expression. May act as a negative regulator of collagen matrix deposition. This is Collagen triple helix repeat-containing protein 1 (Cthrc1) from Rattus norvegicus (Rat).